Consider the following 396-residue polypeptide: F-box protein At2g21930 (396 aa).

Residues 19-65 (SGNSVQIPFDLIPEILKRLPVKTLARFLSVSKEYTSIIRNRDFMKSY) enclose the F-box domain.

The sequence is that of F-box protein At2g21930 from Arabidopsis thaliana (Mouse-ear cress).